A 365-amino-acid chain; its full sequence is 2-aminoethylphosphonate--pyruvate transaminase (365 aa).

At Lys194 the chain carries N6-(pyridoxal phosphate)lysine.

It belongs to the class-V pyridoxal-phosphate-dependent aminotransferase family. PhnW subfamily. In terms of assembly, homodimer. It depends on pyridoxal 5'-phosphate as a cofactor.

The enzyme catalyses (2-aminoethyl)phosphonate + pyruvate = phosphonoacetaldehyde + L-alanine. Involved in phosphonate degradation. This is 2-aminoethylphosphonate--pyruvate transaminase from Bacillus cytotoxicus (strain DSM 22905 / CIP 110041 / 391-98 / NVH 391-98).